The chain runs to 287 residues: MAHLFKEKSNCYFCFRCLESPVYLNCGYICCLKCLDSLEKSPEGDGVLCPTCSVVSLKEDIIHAKQLGALVTKIKNLEPQLNFILTMDQGMKIFQVTMTLDVDTAQNHLIISDDLLSVYYTPQKQARKKCAERFHPSPCVLGSSRFTSGRHYWEVVVGTSKEWDIGICKESINRKKAIHLSEKNGFWTVGVRAKKVYSASTDPLTVLRVNPRLRRVGIFLDMLEKSVSFWDLSDGSHIYTFLEIPDTDPFRPFFSPASSYPDGDQEQVLSICPVTNPGIFGIPVNPQ.

The RING-type; degenerate zinc finger occupies Cys-11–Ser-53. The B30.2/SPRY domain maps to Glu-78–Gly-278.

In terms of assembly, interacts with PSMB1, UBE2A and CCNB1. Expressed in the ovaries and oocytes (at protein level). Expression restricted to gonads. In testis, present at later stages of spermatogeneis and abundant in elongating spermatids.

The protein localises to the cytoplasm. Its subcellular location is the nucleus. The sequence is that of Ret finger protein-like 4A (Rfpl4a) from Mus musculus (Mouse).